A 131-amino-acid chain; its full sequence is Large ribosomal subunit protein bL17 (131 aa).

Belongs to the bacterial ribosomal protein bL17 family. As to quaternary structure, part of the 50S ribosomal subunit. Contacts protein L32.

This is Large ribosomal subunit protein bL17 from Janthinobacterium sp. (strain Marseille) (Minibacterium massiliensis).